A 241-amino-acid chain; its full sequence is tRNA (guanine-N(1)-)-methyltransferase (241 aa).

S-adenosyl-L-methionine is bound by residues glycine 112 and 131 to 136 (LGDFVL).

The protein belongs to the RNA methyltransferase TrmD family. In terms of assembly, homodimer.

The protein localises to the cytoplasm. The enzyme catalyses guanosine(37) in tRNA + S-adenosyl-L-methionine = N(1)-methylguanosine(37) in tRNA + S-adenosyl-L-homocysteine + H(+). Its function is as follows. Specifically methylates guanosine-37 in various tRNAs. This chain is tRNA (guanine-N(1)-)-methyltransferase, found in Clostridium novyi (strain NT).